The primary structure comprises 236 residues: Ubiquinone biosynthesis O-methyltransferase (236 aa).

Residues arginine 40, glycine 59, aspartate 80, and leucine 124 each coordinate S-adenosyl-L-methionine.

This sequence belongs to the methyltransferase superfamily. UbiG/COQ3 family.

The enzyme catalyses a 3-demethylubiquinol + S-adenosyl-L-methionine = a ubiquinol + S-adenosyl-L-homocysteine + H(+). It catalyses the reaction a 3-(all-trans-polyprenyl)benzene-1,2-diol + S-adenosyl-L-methionine = a 2-methoxy-6-(all-trans-polyprenyl)phenol + S-adenosyl-L-homocysteine + H(+). Its pathway is cofactor biosynthesis; ubiquinone biosynthesis. In terms of biological role, O-methyltransferase that catalyzes the 2 O-methylation steps in the ubiquinone biosynthetic pathway. This chain is Ubiquinone biosynthesis O-methyltransferase, found in Nitrosococcus oceani (strain ATCC 19707 / BCRC 17464 / JCM 30415 / NCIMB 11848 / C-107).